The sequence spans 207 residues: GTP-binding protein Rheb homolog 1 (207 aa).

The GTP site is built by Gly-25, Lys-26, Ser-27, Tyr-42, Thr-45, Asn-126, Asp-129, and Ala-157. Residue Ser-27 coordinates Mg(2+). Residues 42–50 (YESTIEDQH) carry the Effector region motif. Thr-45 is a Mg(2+) binding site. A compositionally biased stretch (polar residues) spans 180-193 (NLSPTERPNGNSPK). Residues 180–207 (NLSPTERPNGNSPKRNPFKDDGKPCSIS) are disordered. Positions 196-207 (PFKDDGKPCSIS) are enriched in basic and acidic residues. Position 204 is a cysteine methyl ester (Cys-204). Residue Cys-204 is the site of S-farnesyl cysteine attachment. Positions 205–207 (SIS) are cleaved as a propeptide — removed in mature form.

It belongs to the small GTPase superfamily. Rheb family.

The protein localises to the cell membrane. It carries out the reaction GTP + H2O = GDP + phosphate + H(+). Binds GTP and exhibits intrinsic GTPase activity. This Caenorhabditis elegans protein is GTP-binding protein Rheb homolog 1 (rheb-1).